The primary structure comprises 277 residues: MEMO1 family protein Tpet_0837 (277 aa).

This sequence belongs to the MEMO1 family.

This chain is MEMO1 family protein Tpet_0837, found in Thermotoga petrophila (strain ATCC BAA-488 / DSM 13995 / JCM 10881 / RKU-1).